The sequence spans 185 residues: Neuronal vesicle trafficking-associated protein 1 (185 aa).

Over 1–82 (MVKLGNNFSE…ITEGVSERFK (82 aa)) the chain is Cytoplasmic. The chain crosses the membrane as a helical; Signal-anchor for type II membrane protein span at residues 83 to 103 (VTVLVLFALAFLTCVVFLVVY). The Lumenal segment spans residues 104–185 (KVYKYDHTCP…QETEAAEKSA (82 aa)).

The protein belongs to the NSG family.

Its subcellular location is the membrane. It is found in the golgi apparatus. It localises to the trans-Golgi network membrane. The protein resides in the endosome membrane. The protein localises to the cell projection. Its subcellular location is the dendrite. It is found in the early endosome membrane. It localises to the late endosome membrane. The protein resides in the lysosome lumen. The protein localises to the recycling endosome membrane. Its subcellular location is the cytoplasmic vesicle membrane. It is found in the golgi stack membrane. It localises to the endosome. The protein resides in the multivesicular body membrane. In terms of biological role, plays a role in the recycling mechanism in neurons of multiple receptors and acts at the level of early endosomes to promote sorting of receptors toward a recycling pathway. This Gallus gallus (Chicken) protein is Neuronal vesicle trafficking-associated protein 1.